The following is a 540-amino-acid chain: Chaperonin GroEL (540 aa).

Residues 29–32 (TLGP), 86–90 (DGTTT), G413, 476–478 (NAA), and D492 contribute to the ATP site.

The protein belongs to the chaperonin (HSP60) family. In terms of assembly, forms a cylinder of 14 subunits composed of two heptameric rings stacked back-to-back. Interacts with the co-chaperonin GroES.

The protein localises to the cytoplasm. It catalyses the reaction ATP + H2O + a folded polypeptide = ADP + phosphate + an unfolded polypeptide.. Functionally, together with its co-chaperonin GroES, plays an essential role in assisting protein folding. The GroEL-GroES system forms a nano-cage that allows encapsulation of the non-native substrate proteins and provides a physical environment optimized to promote and accelerate protein folding. In Streptococcus pneumoniae (strain Hungary19A-6), this protein is Chaperonin GroEL.